Reading from the N-terminus, the 468-residue chain is WD repeat-containing protein 55 homolog (468 aa).

The disordered stretch occupies residues 1–107 (MRNFNSPKFG…VPKRVIDDYD (107 aa)). 3 stretches are compositionally biased toward acidic residues: residues 15–26 (DDSDDDDFDSGT), 41–58 (PITE…EYNP), and 67–91 (SDDE…DGED). WD repeat units lie at residues 134 to 173 (KTED…CTIV), 178 to 217 (THTK…LKRF), 221 to 259 (AHEE…PVFK), 262 to 301 (EVED…MYVQ), 304 to 343 (PYEE…YHCD), and 388 to 427 (QHSL…EFDD).

The protein belongs to the WD repeat WDR55 family.

The chain is WD repeat-containing protein 55 homolog from Aedes aegypti (Yellowfever mosquito).